Here is a 459-residue protein sequence, read N- to C-terminus: Putrescine aminotransferase (459 aa).

Residues 150–151 (GT) and Gln-274 each bind pyridoxal 5'-phosphate. Lys-300 carries the N6-(pyridoxal phosphate)lysine modification. Thr-332 is a pyridoxal 5'-phosphate binding site.

It belongs to the class-III pyridoxal-phosphate-dependent aminotransferase family. Putrescine aminotransferase subfamily. Requires pyridoxal 5'-phosphate as cofactor.

The enzyme catalyses an alkane-alpha,omega-diamine + 2-oxoglutarate = an omega-aminoaldehyde + L-glutamate. It catalyses the reaction putrescine + 2-oxoglutarate = 1-pyrroline + L-glutamate + H2O. The catalysed reaction is cadaverine + 2-oxoglutarate = 5-aminopentanal + L-glutamate. It functions in the pathway amine and polyamine degradation; putrescine degradation; 4-aminobutanal from putrescine (transaminase route): step 1/1. Catalyzes the aminotransferase reaction from putrescine to 2-oxoglutarate, leading to glutamate and 4-aminobutanal, which spontaneously cyclizes to form 1-pyrroline. This is the first step in one of two pathways for putrescine degradation, where putrescine is converted into 4-aminobutanoate (gamma-aminobutyrate or GABA) via 4-aminobutanal. Also functions as a cadaverine transaminase in a a L-lysine degradation pathway to succinate that proceeds via cadaverine, glutarate and L-2-hydroxyglutarate. This is Putrescine aminotransferase from Escherichia coli O81 (strain ED1a).